We begin with the raw amino-acid sequence, 256 residues long: Lysosomal membrane ascorbate-dependent ferrireductase CYB561A3 (256 aa).

Residues 1-3 lie on the Cytoplasmic side of the membrane; the sequence is MAS. The helical transmembrane segment at 4–24 threads the bilayer; the sequence is GWFYMSCMVLGSLGSMCILFT. Residues 12–219 form the Cytochrome b561 domain; it reads VLGSLGSMCI…FGLLVLYILL (208 aa). Topologically, residues 25 to 40 are lumenal; sequence TYWMQYWRGGFAWDGT. The helical transmembrane segment at 41–61 threads the bilayer; that stretch reads VLMFNWHPVLMVSGMVVLYGA. Residues His47 and Arg67 each coordinate heme b. At 62–83 the chain is on the cytoplasmic side; sequence ASLVYRLPASWVGPKLPWKVLH. L-ascorbate is bound by residues Lys76 and Lys80. Heme b is bound at residue His83. The chain crosses the membrane as a helical span at residues 84–104; the sequence is AALHLLAFTVTVVGLTAVFGF. The Lumenal segment spans residues 105-119; sequence HNHSKITHLYSLHSW. Asn106 carries an N-linked (GlcNAc...) asparagine glycan. Heme b-binding positions include 112 to 115 and His117; that span reads HLYS. The helical transmembrane segment at 120–140 threads the bilayer; it reads LGITTVALFACQWFLGFAVFL. The Cytoplasmic segment spans residues 141 to 154; that stretch reads LPWASQWLRSLLKP. Arg149 serves as a coordination point for L-ascorbate. A helical membrane pass occupies residues 155–175; that stretch reads VHVFFGACILSLSIASVISGI. Positions 156 and 177 each coordinate heme b. Over 176–202 the chain is Lumenal; it reads NEKLFFVLKNATRPYSSLPGEAVFANS. A helical transmembrane segment spans residues 203–223; it reads TGILVVSFGLLVLYILLASSW. Residue Arg224 coordinates heme b. The Cytoplasmic segment spans residues 224 to 256; that stretch reads RRPDPGALTDRQVWLLVSHYRWDKAKKACFAPC.

Homodimer. Heme b serves as cofactor. In terms of processing, N-glycosylated.

The protein resides in the late endosome membrane. It is found in the lysosome membrane. It catalyses the reaction Fe(3+)(out) + L-ascorbate(in) = monodehydro-L-ascorbate radical(in) + Fe(2+)(out) + H(+). In terms of biological role, transmembrane reductase that uses ascorbate as an electron donor in the cytoplasm and transfers electrons across membranes to reduce iron cations Fe(3+) into Fe(2+) in the lumen of the late endosome and lysosome. Reduced iron can then be extruded from the late endosome and lysosome to the cytoplasm by divalent metal-specific transporters. It is therefore most probably involved in endosomal and lysosomal cellular iron homeostasis. The polypeptide is Lysosomal membrane ascorbate-dependent ferrireductase CYB561A3 (Rattus norvegicus (Rat)).